Here is a 299-residue protein sequence, read N- to C-terminus: GTPase Era (299 aa).

An Era-type G domain is found at 4 to 171; sequence KSGFVAILGR…ISLLTDNLEE (168 aa). Residues 12-19 are G1; it reads GRPNVGKS. 12-19 is a binding site for GTP; it reads GRPNVGKS. The segment at 38–42 is G2; the sequence is QTTRN. The segment at 59–62 is G3; it reads DTPG. Residues 59–63 and 121–124 contribute to the GTP site; these read DTPGI and NKID. Residues 121–124 form a G4 region; it reads NKID. Positions 150 to 152 are G5; the sequence is ISA. One can recognise a KH type-2 domain in the interval 202 to 280; sequence TQQEIPHSVA…YLETWVKVKK (79 aa).

It belongs to the TRAFAC class TrmE-Era-EngA-EngB-Septin-like GTPase superfamily. Era GTPase family. In terms of assembly, monomer.

Its subcellular location is the cytoplasm. It is found in the cell membrane. An essential GTPase that binds both GDP and GTP, with rapid nucleotide exchange. Plays a role in 16S rRNA processing and 30S ribosomal subunit biogenesis and possibly also in cell cycle regulation and energy metabolism. The polypeptide is GTPase Era (Streptococcus uberis (strain ATCC BAA-854 / 0140J)).